Here is a 352-residue protein sequence, read N- to C-terminus: C-C chemokine receptor type 5 (352 aa).

Residues 1 to 30 (MDYQVSSPTYDIDYYTSEPCQKINVKQIAA) lie on the Extracellular side of the membrane. Y3 bears the Sulfotyrosine mark. S6 and S7 each carry an O-linked (GalNAc...) serine glycan. 3 positions are modified to sulfotyrosine: Y10, Y14, and Y15. 2 disulfides stabilise this stretch: C20/C269 and C101/C178. A helical transmembrane segment spans residues 31-58 (RLLPPLYSLVFIFGFVGNMLVILILINC). At 59 to 68 (KRLKSMTDIY) the chain is on the cytoplasmic side. Residues 69-89 (LLNLAISDLFFLLTVPFWAHY) form a helical membrane-spanning segment. The Extracellular segment spans residues 90 to 102 (AAAQWDFGNTMCQ). Residues 103–124 (LLTGLYFIGFFSGIFFIILLTI) form a helical membrane-spanning segment. Residues 125-141 (DRYLAIVHAVFALKART) lie on the Cytoplasmic side of the membrane. A helical membrane pass occupies residues 142-166 (VTFGVVTSVITWVVAVFASLPGIIF). Residues 167–198 (TRSQKEGLHYTCSSHFPYSQYQFWKNFQTLKI) are Extracellular-facing. A helical membrane pass occupies residues 199–218 (VILGLVLPLLVMVICYSGIL). At 219–235 (KTLLRCRNEKKRHRAVR) the chain is on the cytoplasmic side. Residues 236 to 260 (LIFTIMIVYFLFWAPYNIVLLLNTF) form a helical membrane-spanning segment. The Extracellular segment spans residues 261–277 (QEFFGLNNCSSSNRLDQ). The chain crosses the membrane as a helical span at residues 278–301 (AMQVTETLGMTHCCINPIIYAFVG). The Cytoplasmic segment spans residues 302–352 (EKFRNYLLVFFQKHIAKRFCKCCSIFQQEAPERASSVYTRSTGEQEISVGL). 3 S-palmitoyl cysteine lipidation sites follow: C321, C323, and C324. Phosphoserine; by BARK1 occurs at positions 336, 337, 342, and 349.

The protein belongs to the G-protein coupled receptor 1 family. In terms of assembly, interacts with PRAF2. Efficient ligand binding to CCL3/MIP-1alpha and CCL4/MIP-1beta requires sulfation, O-glycosylation and sialic acid modifications. Glycosylation on Ser-6 is required for efficient binding of CCL4. Interacts with GRK2. Interacts with ARRB1 and ARRB2. Interacts with CNIH4. Interacts with S100A4; this interaction stimulates T-lymphocyte chemotaxis. In terms of processing, sulfated on at least 2 of the N-terminal tyrosines. Sulfation is required for efficient binding of the chemokines, CCL3 and CCL4. Post-translationally, palmitoylation in the C-terminal is important for cell surface expression. Phosphorylation on serine residues in the C-terminal is stimulated by binding CC chemokines especially by APO-RANTES. In terms of processing, O-glycosylated, but not N-glycosylated. Ser-6 appears to be the major site even if Ser-7 may be also O-glycosylated. Also sialylated glycans present which contribute to chemokine binding. Thr-16 and Ser-17 may also be glycosylated and, if so, with small moieties such as a T-antigen.

The protein resides in the cell membrane. Functionally, receptor for a number of inflammatory CC-chemokines including CCL3/MIP-1-alpha, CCL4/MIP-1-beta and RANTES and subsequently transduces a signal by increasing the intracellular calcium ion level. May play a role in the control of granulocytic lineage proliferation or differentiation. Participates in T-lymphocyte migration to the infection site by acting as a chemotactic receptor. In Pongo abelii (Sumatran orangutan), this protein is C-C chemokine receptor type 5 (CCR5).